A 141-amino-acid chain; its full sequence is HTH-type transcriptional repressor NsrR (141 aa).

Residues 2-129 (QLTSFTDYGL…DNYTLADLVE (128 aa)) enclose the HTH rrf2-type domain. The H-T-H motif DNA-binding region spans 28–51 (ISEVTEVYGVSRNHMVKIINQLSR). The [2Fe-2S] cluster site is built by cysteine 91, cysteine 96, and cysteine 102.

It depends on [2Fe-2S] cluster as a cofactor.

Its function is as follows. Nitric oxide-sensitive repressor of genes involved in protecting the cell against nitrosative stress. May require iron for activity. This is HTH-type transcriptional repressor NsrR from Salmonella choleraesuis (strain SC-B67).